A 33-amino-acid polypeptide reads, in one-letter code: Photosystem II reaction center protein Psb30 (33 aa).

Residues 5-25 (LIVQLGSLTLITIAGPLIVAL) traverse the membrane as a helical segment.

It belongs to the Psb30/Ycf12 family. PSII is composed of 1 copy each of membrane proteins PsbA, PsbB, PsbC, PsbD, PsbE, PsbF, PsbH, PsbI, PsbJ, PsbK, PsbL, PsbM, PsbT, PsbY, PsbZ, Psb30/Ycf12, peripheral proteins of the oxygen-evolving complex and a large number of cofactors. It forms dimeric complexes.

Its subcellular location is the plastid. The protein resides in the chloroplast thylakoid membrane. In terms of biological role, a core subunit of photosystem II (PSII), probably helps stabilize the reaction center. The polypeptide is Photosystem II reaction center protein Psb30 (Euglena mutabilis).